Reading from the N-terminus, the 833-residue chain is Leucine--tRNA ligase (833 aa).

The 'HIGH' region motif lies at 41 to 52; the sequence is PYPSGAGLHVGH. The 'KMSKS' region signature appears at 610–614; that stretch reads KMSKS. Residue K613 participates in ATP binding.

This sequence belongs to the class-I aminoacyl-tRNA synthetase family.

Its subcellular location is the cytoplasm. It carries out the reaction tRNA(Leu) + L-leucine + ATP = L-leucyl-tRNA(Leu) + AMP + diphosphate. This is Leucine--tRNA ligase from Streptococcus sanguinis (strain SK36).